The chain runs to 311 residues: MSEELTPQQVTRMAKLQKRLRTEVGRAIGDYNMIEEGDRVMCCLSGGKDSYAMLDILLNLQQRAPIKFEIVAVNLDQKQPGFPEDILPAYLDTLGVAYHILEKDTYSIVKDKIPEGKTTCSLCSRLRRGTLYGFAQKIGATKIALGHHRDDIIETMFLNMFFAGKMKAMPPKLLSDDGANMVIRPLAYSREKDIAEYAGLKGFPIIPCNLCGSQENLKRAAVKEMLVQWDRDYPGRIETIFTAMQNTAPSQGVDREQFDFLSLTRDPDAPMRGDVAESDLPAFDFVDVANNGHINLDKAVRIDVVNTYTPD.

Positions 45–50 (SGGKDS) match the PP-loop motif motif. [4Fe-4S] cluster-binding residues include cysteine 120, cysteine 123, and cysteine 211.

This sequence belongs to the TtcA family. As to quaternary structure, homodimer. Mg(2+) is required as a cofactor. It depends on [4Fe-4S] cluster as a cofactor.

It localises to the cytoplasm. The catalysed reaction is cytidine(32) in tRNA + S-sulfanyl-L-cysteinyl-[cysteine desulfurase] + AH2 + ATP = 2-thiocytidine(32) in tRNA + L-cysteinyl-[cysteine desulfurase] + A + AMP + diphosphate + H(+). Its pathway is tRNA modification. Functionally, catalyzes the ATP-dependent 2-thiolation of cytidine in position 32 of tRNA, to form 2-thiocytidine (s(2)C32). The sulfur atoms are provided by the cysteine/cysteine desulfurase (IscS) system. The chain is tRNA-cytidine(32) 2-sulfurtransferase from Shewanella halifaxensis (strain HAW-EB4).